Here is a 203-residue protein sequence, read N- to C-terminus: Outer-membrane lipoprotein carrier protein (203 aa).

Positions 1–21 (MKKLLVACCLLSGLISAHALA) are cleaved as a signal peptide.

It belongs to the LolA family. Monomer.

It localises to the periplasm. In terms of biological role, participates in the translocation of lipoproteins from the inner membrane to the outer membrane. Only forms a complex with a lipoprotein if the residue after the N-terminal Cys is not an aspartate (The Asp acts as a targeting signal to indicate that the lipoprotein should stay in the inner membrane). The protein is Outer-membrane lipoprotein carrier protein of Yersinia enterocolitica serotype O:8 / biotype 1B (strain NCTC 13174 / 8081).